Reading from the N-terminus, the 145-residue chain is MPSKVCTLILLFSVINQMKCGSTTDCAMRVFKETIKEMSEVADLQLETLQNLSPDTKRQMKIAIMDVLTSMGLFLEMSTASSFSFATLPIYMLRAQNLMNLLSMDLENLQPEQGTLSESVEKMKNMLISVVNTLPKKAMICFQME.

The signal sequence occupies residues 1-20 (MPSKVCTLILLFSVINQMKC).

This is an uncharacterized protein from Caenorhabditis elegans.